The primary structure comprises 835 residues: U-box domain-containing protein 35 (835 aa).

Disordered regions lie at residues 1–22 (MSRSPDKLALPPPPPPPPSRTV), 177–303 (VRPS…SSNR), and 410–457 (EKEK…LEGT). The segment covering 10 to 19 (LPPPPPPPPS) has biased composition (pro residues). Over residues 195-218 (RTNSSSGSSGPTSDSSDVMSSAHD) the composition is skewed to low complexity. Polar residues predominate over residues 269-282 (SSINRSSTDTTSRW). Basic and acidic residues-rich tracts occupy residues 285–295 (RRRDYEERKEA) and 410–455 (EKEK…EKLE). Residues 340–459 (QSYTDNQVNL…EKEKLEGTLG (120 aa)) adopt a coiled-coil conformation. Residues 480–745 (FSEELKIGMG…DLKDQILPAL (266 aa)) form the Protein kinase domain. Residues 486-494 (IGMGAYGAV) and lysine 507 contribute to the ATP site. Aspartate 602 functions as the Proton acceptor in the catalytic mechanism. The region spanning 765-835 (QPPTHFICPL…TAIMEWRSTR (71 aa)) is the U-box domain.

It belongs to the protein kinase superfamily. Ser/Thr protein kinase family.

The catalysed reaction is L-seryl-[protein] + ATP = O-phospho-L-seryl-[protein] + ADP + H(+). It carries out the reaction L-threonyl-[protein] + ATP = O-phospho-L-threonyl-[protein] + ADP + H(+). The enzyme catalyses S-ubiquitinyl-[E2 ubiquitin-conjugating enzyme]-L-cysteine + [acceptor protein]-L-lysine = [E2 ubiquitin-conjugating enzyme]-L-cysteine + N(6)-ubiquitinyl-[acceptor protein]-L-lysine.. The protein operates within protein modification; protein ubiquitination. Functions as an E3 ubiquitin ligase. In Arabidopsis thaliana (Mouse-ear cress), this protein is U-box domain-containing protein 35 (PUB35).